The following is a 347-amino-acid chain: UDP-N-acetylenolpyruvoylglucosamine reductase (347 aa).

Positions 23–197 (LPARAARLLR…LRVRFRLPQA (175 aa)) constitute an FAD-binding PCMH-type domain. R174 is an active-site residue. The active-site Proton donor is S247. Residue E343 is part of the active site.

This sequence belongs to the MurB family. It depends on FAD as a cofactor.

The protein resides in the cytoplasm. The enzyme catalyses UDP-N-acetyl-alpha-D-muramate + NADP(+) = UDP-N-acetyl-3-O-(1-carboxyvinyl)-alpha-D-glucosamine + NADPH + H(+). Its pathway is cell wall biogenesis; peptidoglycan biosynthesis. Its function is as follows. Cell wall formation. The chain is UDP-N-acetylenolpyruvoylglucosamine reductase from Azoarcus sp. (strain BH72).